Here is a 254-residue protein sequence, read N- to C-terminus: Ribose-5-phosphate isomerase A (254 aa).

Residues 45-48, 105-108, and 118-121 each bind substrate; these read TGST, DGAD, and KGGG. E127 (proton acceptor) is an active-site residue. K145 provides a ligand contact to substrate.

It belongs to the ribose 5-phosphate isomerase family. As to quaternary structure, homodimer.

The enzyme catalyses aldehydo-D-ribose 5-phosphate = D-ribulose 5-phosphate. It functions in the pathway carbohydrate degradation; pentose phosphate pathway; D-ribose 5-phosphate from D-ribulose 5-phosphate (non-oxidative stage): step 1/1. Its function is as follows. Catalyzes the reversible conversion of ribose-5-phosphate to ribulose 5-phosphate. This is Ribose-5-phosphate isomerase A from Treponema pallidum subsp. pallidum (strain SS14).